Reading from the N-terminus, the 556-residue chain is Dihydroxy-acid dehydratase (556 aa).

Mg(2+) is bound at residue D78. Position 119 (C119) interacts with [2Fe-2S] cluster. Mg(2+) is bound by residues D120 and K121. K121 is modified (N6-carboxylysine). C191 provides a ligand contact to [2Fe-2S] cluster. E442 lines the Mg(2+) pocket. S468 (proton acceptor) is an active-site residue.

It belongs to the IlvD/Edd family. As to quaternary structure, homodimer. [2Fe-2S] cluster serves as cofactor. It depends on Mg(2+) as a cofactor.

It catalyses the reaction (2R)-2,3-dihydroxy-3-methylbutanoate = 3-methyl-2-oxobutanoate + H2O. It carries out the reaction (2R,3R)-2,3-dihydroxy-3-methylpentanoate = (S)-3-methyl-2-oxopentanoate + H2O. Its pathway is amino-acid biosynthesis; L-isoleucine biosynthesis; L-isoleucine from 2-oxobutanoate: step 3/4. It functions in the pathway amino-acid biosynthesis; L-valine biosynthesis; L-valine from pyruvate: step 3/4. Functionally, functions in the biosynthesis of branched-chain amino acids. Catalyzes the dehydration of (2R,3R)-2,3-dihydroxy-3-methylpentanoate (2,3-dihydroxy-3-methylvalerate) into 2-oxo-3-methylpentanoate (2-oxo-3-methylvalerate) and of (2R)-2,3-dihydroxy-3-methylbutanoate (2,3-dihydroxyisovalerate) into 2-oxo-3-methylbutanoate (2-oxoisovalerate), the penultimate precursor to L-isoleucine and L-valine, respectively. This chain is Dihydroxy-acid dehydratase, found in Caldanaerobacter subterraneus subsp. tengcongensis (strain DSM 15242 / JCM 11007 / NBRC 100824 / MB4) (Thermoanaerobacter tengcongensis).